Reading from the N-terminus, the 353-residue chain is Inactive ubiquitin thioesterase OTULINL (353 aa).

The segment at 1–80 is required for membrane binding; sequence MEAPRSAPRE…KWWIGYLQRK (80 aa). The OTU domain occupies 125-353; sequence KCVRAVKRDN…NGHHYHIPVF (229 aa).

This sequence belongs to the peptidase C65 family. Otulin subfamily. Does not bind ubiquitin or ubiquitin-like proteins.

It is found in the cytoplasm. It localises to the endoplasmic reticulum membrane. The protein localises to the nucleus envelope. Lacks deubiquitinase activity. The chain is Inactive ubiquitin thioesterase OTULINL from Mus musculus (Mouse).